A 396-amino-acid chain; its full sequence is L-cysteine desulfidase (396 aa).

Cysteine 23 functions as the Proton acceptor in the catalytic mechanism. [4Fe-4S] cluster contacts are provided by cysteine 287, cysteine 329, and cysteine 336.

Belongs to the L-cysteine desulfidase family. Homotrimer. Requires [4Fe-4S] cluster as cofactor.

It catalyses the reaction L-cysteine + H2O = hydrogen sulfide + pyruvate + NH4(+) + H(+). Catalyzes the cleavage of L-cysteine to form 2-aminoprop-2-enoate and sulfide. The former then spontaneously hydrolyzes to pyruvate and NH(3). May be responsible for the production of sulfide required for the biosynthesis of iron-sulfur centers in this archaea. This Methanococcus maripaludis (strain DSM 14266 / JCM 13030 / NBRC 101832 / S2 / LL) protein is L-cysteine desulfidase.